We begin with the raw amino-acid sequence, 74 residues long: Conotoxin AbVIA (74 aa).

Positions 1–17 are cleaved as a signal peptide; that stretch reads VLIIAVLFLTACQLTTA. A propeptide spanning residues 18-38 is cleaved from the precursor; it reads VTSSRGEQKHRALRSTDKKFK. Cystine bridges form between C43–C57, C50–C61, and C56–C68. S73 carries the serine amide modification.

It belongs to the conotoxin O1 superfamily. Expressed by the venom duct.

The protein localises to the secreted. This Conus abbreviatus (Abbreviated cone) protein is Conotoxin AbVIA.